The sequence spans 156 residues: Large ribosomal subunit protein uL22c (156 aa).

It belongs to the universal ribosomal protein uL22 family. In terms of assembly, part of the 50S ribosomal subunit.

The protein localises to the plastid. The protein resides in the chloroplast. Functionally, this protein binds specifically to 23S rRNA. In terms of biological role, the globular domain of the protein is located near the polypeptide exit tunnel on the outside of the subunit, while an extended beta-hairpin is found that lines the wall of the exit tunnel in the center of the 70S ribosome. This is Large ribosomal subunit protein uL22c (rpl22) from Buxus microphylla (Littleleaf boxwood).